The following is a 157-amino-acid chain: Endoribonuclease YbeY (157 aa).

Zn(2+)-binding residues include histidine 118, histidine 122, and histidine 128.

The protein belongs to the endoribonuclease YbeY family. The cofactor is Zn(2+).

The protein resides in the cytoplasm. Its function is as follows. Single strand-specific metallo-endoribonuclease involved in late-stage 70S ribosome quality control and in maturation of the 3' terminus of the 16S rRNA. This chain is Endoribonuclease YbeY, found in Shewanella loihica (strain ATCC BAA-1088 / PV-4).